Consider the following 448-residue polypeptide: Phosphoglucosamine mutase (448 aa).

S108 acts as the Phosphoserine intermediate in catalysis. The Mg(2+) site is built by S108, D247, D249, and D251. The residue at position 108 (S108) is a Phosphoserine.

Belongs to the phosphohexose mutase family. The cofactor is Mg(2+). In terms of processing, activated by phosphorylation.

The catalysed reaction is alpha-D-glucosamine 1-phosphate = D-glucosamine 6-phosphate. Its function is as follows. Catalyzes the conversion of glucosamine-6-phosphate to glucosamine-1-phosphate. The chain is Phosphoglucosamine mutase from Herminiimonas arsenicoxydans.